The chain runs to 421 residues: eIF5-mimic protein 1 (421 aa).

A disordered region spans residues 1–24 (MNTGKQQKPVLTGQRFKTRKRDEK). Residues 250-417 (TQQTLGTRKE…QNAEEESESE (168 aa)) enclose the W2 domain.

This sequence belongs to the BZW family.

It is found in the cytoplasm. Its function is as follows. Translation initiation regulator which may repress non-AUG initiated translation and repeat-associated non-AUG (RAN) initiated translation by acting as a competitive inhibitor of eukaryotic translation initiation factor 5 (EIF5) function. The polypeptide is eIF5-mimic protein 1 (bzw2) (Danio rerio (Zebrafish)).